The primary structure comprises 134 residues: Cerato-platanin (134 aa).

A signal peptide spans Met1 to Ala14. Positions Ser18–Asp20 are binding of oligomers of N-acetylglucosamine (GlcNAc). 3 binding of N-acetylglucosamine tetramer (GlcNAc-4) regions span residues Ser31–Ala43, Gly65–Ser68, and Asp91–Gly95. Cystine bridges form between Cys34–Cys71 and Cys74–Cys129. The binding of oligomers of N-acetylglucosamine (GlcNAc) stretch occupies residues Ala113–Val116.

This sequence belongs to the cerato-platanin family. Monomer.

It is found in the secreted. Its subcellular location is the cell wall. Functionally, phytotoxin which causes production of phytoalexin in platanus acerifolia, platanus occidentalis and platanus orientalis. Induces cell necrosis in tobacco leaves, and in callus cells and leaves of P.acerifolia. Induces reactive oxygen species (ROS) synthesis, nitric oxide (NO) production and mitogen-activated protein kinases (MAPKs) phosphorylation in the leaves of A.thaliana and P.acerifolia. Results in H(2)O(2) production on the epidermis around the stomata, rapid closure of the stomata, reduced photosynthetic and CO(2) assimilation rate, and an increase in a number of volatile organic compound (VOC) emission in A.thaliana leaves. Induces overexpression of genes related to salicylic acid- and ethylene-signaling, camalexin synthesis, ROS production and oxidative stress, and genes of various receptor kinases, and down-regulation of a number of jasmonic acid (JA)-signaling genes in A.thaliana leaves. Renders resistance against C.platani in A.thaliana and P.acerifolia. Renders localised resistance of A.thaliana against infection by virulent foliar pathogens B.cinerea and P.syringae pv. tomato. Binds cellulose analog carboxymethyl cellulose (CMC). Expansin-like protein with probable fungal and plant cell wall loosening activity based on its non-enzymatic cellulose weakening activity in vitro. Increases glucose production by cellulase after pre-incubation of cellulose with this protein. In contrast, according to PubMed:23512479, no synergistic effect with cellulases. May have a structural role in the fungal cell wall based on its ability to bind chitin, but does not bind beta-1,3-glucan. The sequence is that of Cerato-platanin from Ceratocystis fimbriata f. sp. platani.